The following is a 515-amino-acid chain: Alpha-1B adrenergic receptor (515 aa).

Residues 1-45 (MNPDLDTGHNTSAPAQWGELKDANFTGPNQTSSNSTLPQLDVTRA) are Extracellular-facing. 3 N-linked (GlcNAc...) asparagine glycosylation sites follow: asparagine 10, asparagine 24, and asparagine 34. The helical transmembrane segment at 46–70 (ISVGLVLGAFILFAIVGNILVILSV) threads the bilayer. Residues 71–83 (ACNRHLRTPTNYF) are Cytoplasmic-facing. The helical transmembrane segment at 84 to 105 (IVNLAIADLLLSFTVLPFSATL) threads the bilayer. The Extracellular portion of the chain corresponds to 106-115 (EVLGYWVLGR). A helical transmembrane segment spans residues 116–141 (IFCDIWAAVDVLCCTASILSLCAISI). Cysteine 118 and cysteine 195 form a disulfide bridge. The Cytoplasmic segment spans residues 142–161 (DRYIGVRYSLQYPTLVTRRK). A helical transmembrane segment spans residues 162–184 (AILALLSVWVLSTVISIGPLLGW). Over 185–201 (KEPAPNDDKECGVTEEP) the chain is Extracellular. A helical membrane pass occupies residues 202–224 (FYALFSSLGSFYIPLAVILVMYC). The Cytoplasmic portion of the chain corresponds to 225-295 (RVYIVAKRTT…FSREKKAAKT (71 aa)). Threonine 264 carries the phosphothreonine modification. Residues 296 to 319 (LGIVVGMFILCWLPFFIALPLGSL) traverse the membrane as a helical segment. The Extracellular portion of the chain corresponds to 320-326 (FSTLKPP). Residues 327–351 (DAVFKVVFWLGYFNSCLNPIIYPCS) traverse the membrane as a helical segment. The Cytoplasmic segment spans residues 352 to 515 (SKEFKRAFMR…SNMPLAPGHF (164 aa)). Residue cysteine 365 is the site of S-palmitoyl cysteine attachment. Residues 368 to 378 (RSGRRRRRRRR) carry the Nuclear localization signal motif. Disordered regions lie at residues 392–428 (GGSLERSQSRKDSLDDSGSCMSGSQRTLPSASPSPGY) and 473–515 (LLGE…PGHF). Positions 410–424 (SCMSGSQRTLPSASP) are enriched in polar residues.

It belongs to the G-protein coupled receptor 1 family. Adrenergic receptor subfamily. ADRA1B sub-subfamily. In terms of assembly, homo- and heterooligomer. Heterooligomerizes with ADRA1B homooligomers in cardiac myocytes. Interacts with CAVIN4.

The protein localises to the nucleus membrane. The protein resides in the cell membrane. It localises to the cytoplasm. Its subcellular location is the membrane. It is found in the caveola. This alpha-adrenergic receptor mediates its action by association with G proteins that activate a phosphatidylinositol-calcium second messenger system. Its effect is mediated by G(q) and G(11) proteins. Nuclear ADRA1A-ADRA1B heterooligomers regulate phenylephrine (PE)-stimulated ERK signaling in cardiac myocytes. This chain is Alpha-1B adrenergic receptor (ADRA1B), found in Mesocricetus auratus (Golden hamster).